We begin with the raw amino-acid sequence, 585 residues long: Arginine--tRNA ligase (585 aa).

The short motif at 131–141 (ANPTGPMHVGH) is the 'HIGH' region element.

The protein belongs to the class-I aminoacyl-tRNA synthetase family. In terms of assembly, monomer.

The protein resides in the cytoplasm. The enzyme catalyses tRNA(Arg) + L-arginine + ATP = L-arginyl-tRNA(Arg) + AMP + diphosphate. This Bartonella bacilliformis (strain ATCC 35685 / KC583 / Herrer 020/F12,63) protein is Arginine--tRNA ligase.